The sequence spans 173 residues: NADH-quinone oxidoreductase subunit B 1 (173 aa).

[4Fe-4S] cluster is bound by residues Cys-42, Cys-43, Cys-107, and Cys-137.

It belongs to the complex I 20 kDa subunit family. As to quaternary structure, NDH-1 is composed of 14 different subunits. Subunits NuoB, C, D, E, F, and G constitute the peripheral sector of the complex. The cofactor is [4Fe-4S] cluster.

The protein resides in the cell inner membrane. It carries out the reaction a quinone + NADH + 5 H(+)(in) = a quinol + NAD(+) + 4 H(+)(out). In terms of biological role, NDH-1 shuttles electrons from NADH, via FMN and iron-sulfur (Fe-S) centers, to quinones in the respiratory chain. The immediate electron acceptor for the enzyme in this species is believed to be ubiquinone. Couples the redox reaction to proton translocation (for every two electrons transferred, four hydrogen ions are translocated across the cytoplasmic membrane), and thus conserves the redox energy in a proton gradient. This is NADH-quinone oxidoreductase subunit B 1 from Anaeromyxobacter sp. (strain K).